A 105-amino-acid polypeptide reads, in one-letter code: Large ribosomal subunit protein uL23 (105 aa).

This sequence belongs to the universal ribosomal protein uL23 family. As to quaternary structure, part of the 50S ribosomal subunit. Contacts protein L29, and trigger factor when it is bound to the ribosome.

In terms of biological role, one of the early assembly proteins it binds 23S rRNA. One of the proteins that surrounds the polypeptide exit tunnel on the outside of the ribosome. Forms the main docking site for trigger factor binding to the ribosome. This Ureaplasma parvum serovar 3 (strain ATCC 27815 / 27 / NCTC 11736) protein is Large ribosomal subunit protein uL23.